Reading from the N-terminus, the 788-residue chain is 5-methyltetrahydropteroyltriglutamate--homocysteine methyltransferase (788 aa).

5-methyltetrahydropteroyltri-L-glutamate contacts are provided by residues 24 to 27 and Lys-140; that span reads RELK. Residues 463–465 and Glu-516 contribute to the L-homocysteine site; that span reads IGS. L-methionine-binding positions include 463–465 and Glu-516; that span reads IGS. Residues 547 to 548 and Trp-593 contribute to the 5-methyltetrahydropteroyltri-L-glutamate site; that span reads RC. Asp-631 is an L-homocysteine binding site. Asp-631 serves as a coordination point for L-methionine. Residue Glu-637 coordinates 5-methyltetrahydropteroyltri-L-glutamate. The Zn(2+) site is built by His-673, Cys-675, and Glu-697. His-726 acts as the Proton donor in catalysis. Cys-758 contributes to the Zn(2+) binding site.

It belongs to the vitamin-B12 independent methionine synthase family. Requires Zn(2+) as cofactor.

The catalysed reaction is 5-methyltetrahydropteroyltri-L-glutamate + L-homocysteine = tetrahydropteroyltri-L-glutamate + L-methionine. It functions in the pathway amino-acid biosynthesis; L-methionine biosynthesis via de novo pathway; L-methionine from L-homocysteine (MetE route): step 1/1. In terms of biological role, catalyzes the transfer of a methyl group from 5-methyltetrahydrofolate to homocysteine resulting in methionine formation. In Rhodopseudomonas palustris (strain ATCC BAA-98 / CGA009), this protein is 5-methyltetrahydropteroyltriglutamate--homocysteine methyltransferase.